Consider the following 177-residue polypeptide: Ribosome maturation factor RimM (177 aa).

Residues 92 to 166 form the PRC barrel domain; it reads EDTFYHADLM…RIVVVPDTNP (75 aa).

The protein belongs to the RimM family. As to quaternary structure, binds ribosomal protein uS19.

The protein resides in the cytoplasm. In terms of biological role, an accessory protein needed during the final step in the assembly of 30S ribosomal subunit, possibly for assembly of the head region. Essential for efficient processing of 16S rRNA. May be needed both before and after RbfA during the maturation of 16S rRNA. It has affinity for free ribosomal 30S subunits but not for 70S ribosomes. This Azorhizobium caulinodans (strain ATCC 43989 / DSM 5975 / JCM 20966 / LMG 6465 / NBRC 14845 / NCIMB 13405 / ORS 571) protein is Ribosome maturation factor RimM.